A 522-amino-acid polypeptide reads, in one-letter code: MDITNRQAVLKNFLGNSPDWYKLAIMGFLIINPLVFFFVSPFVAGWMLVIEFIFTLAMALKCYPLQPGGLLAIQAVAIGMTSPHQVAEEIANNLEVLLLLVFMVAGIYFMKQLLLFVFTKLLLNIRSKTILSLAFCLASAFLSAFLDALTVIAVVISVSVGFYTIYHNVTSNHSDKDITDDSGIDNQDSHETLEQFRAFLRSLMMHAGVGTALGGVMTMVGEPQNLIIAKSAGWNFADFFIRMLPVTLPVFIFGLLVCLLVEKFKLFGYGAQLPERVRQVLTEYDQQANAKRTKQEKMKLIVQAIIGVWLVLALHLAEVGLVGLSVIILATSFCGITNEHSLGKAFQEALPFTALLTVFFAVVAVIIEQSLFTPIIQFVLQASPSAQLSLFYLFNGLLSSVSDNVFVGTVYINEARSAFEHGIVSLQQFELLAVAINTGTNLPSVATPNGQAAFLFLLTSALAPLIRLSYGRMVYMALPYTLVMTIVGLLGVEFLLVPMTEWLTQAGWISLPHITNGVAIPH.

Helical transmembrane passes span F13 to P33, L98 to F118, A140 to V160, F239 to L259, A304 to L324, L356 to I376, L390 to V410, A446 to I466, and A477 to V497.

Belongs to the NhaB Na(+)/H(+) (TC 2.A.34) antiporter family.

It is found in the cell inner membrane. The enzyme catalyses 2 Na(+)(in) + 3 H(+)(out) = 2 Na(+)(out) + 3 H(+)(in). Functionally, na(+)/H(+) antiporter that extrudes sodium in exchange for external protons. The polypeptide is Na(+)/H(+) antiporter NhaB (Yersinia pestis bv. Antiqua (strain Angola)).